The chain runs to 222 residues: Charged multivesicular body protein 3 (222 aa).

The N-myristoyl glycine moiety is linked to residue G2. Positions 2-113 (GLFGKTQEKP…LQKSTEVMKA (112 aa)) are intramolecular interaction with C-terminus. The stretch at 22–54 (KIRKEMRVVDRQIRDIQREEEKVKRSVKDAAKK) forms a coiled coil. 2 important for autoinhibitory function regions span residues 59–64 (VCVVLA) and 168–169 (IL). Residues 149-222 (ESMDDQEEME…MQSRLATLRS (74 aa)) are a coiled coil. The intramolecular interaction with N-terminus stretch occupies residues 151–220 (MDDQEEMEEA…EAMQSRLATL (70 aa)). An interaction with VPS4A region spans residues 151-222 (MDDQEEMEEA…MQSRLATLRS (72 aa)). Residue K179 forms a Glycyl lysine isopeptide (Lys-Gly) (interchain with G-Cter in ubiquitin) linkage. A disordered region spans residues 180 to 222 (APSKVTDALPEPEPLGAMAASEDEEEEEEALEAMQSRLATLRS). Interaction with STAMBP regions lie at residues 196–222 (AMAA…TLRS), 203–207 (EEEEE), and 221–222 (RS). S200 is subject to Phosphoserine. The span at 200–210 (SEDEEEEEEAL) shows a compositional bias: acidic residues. Positions 201-211 (EDEEEEEEALE) match the MIT-interacting motif motif.

This sequence belongs to the SNF7 family. As to quaternary structure, probable core component of the endosomal sorting required for transport complex III (ESCRT-III). ESCRT-III components are thought to multimerize to form a flat lattice on the perimeter membrane of the endosome. Several assembly forms of ESCRT-III may exist that interact and act sequentially. Forms a metastable monomer in solution; its core structure (without part of the putative autoinhibitory C-terminal acidic region) oligomerizes into a flat lattice via two different dimerization interfaces. In vitro, heteromerizes with CHMP2A (but not CHMP4) to form helical tubular structures that expose membrane-interacting sites on the outside whereas VPS4B can associate on the inside of the tubule. May interact with IGFBP7; the relevance of such interaction however remains unclear. Interacts with CHMP2A. Interacts with CHMP4A; the interaction requires the release of CHMP4A autoinhibition. Interacts with VPS4A. Interacts with STAMBP; the interaction appears to relieve the autoinhibition of CHMP3. Interacts with VTA1.

The protein resides in the cytoplasm. The protein localises to the cytosol. It localises to the membrane. Its subcellular location is the endosome. It is found in the late endosome membrane. Probable core component of the endosomal sorting required for transport complex III (ESCRT-III) which is involved in multivesicular bodies (MVBs) formation and sorting of endosomal cargo proteins into MVBs. MVBs contain intraluminal vesicles (ILVs) that are generated by invagination and scission from the limiting membrane of the endosome and mostly are delivered to lysosomes enabling degradation of membrane proteins, such as stimulated growth factor receptors, lysosomal enzymes and lipids. The MVB pathway appears to require the sequential function of ESCRT-O, -I,-II and -III complexes. ESCRT-III proteins mostly dissociate from the invaginating membrane before the ILV is released. The ESCRT machinery also functions in topologically equivalent membrane fission events, such as the terminal stages of cytokinesis and the budding of enveloped viruses (lentiviruses). ESCRT-III proteins are believed to mediate the necessary vesicle extrusion and/or membrane fission activities, possibly in conjunction with the AAA ATPase VPS4. Selectively binds to phosphatidylinositol 3,5-bisphosphate PtdIns(3,5)P2 and PtdIns(3,4)P2 in preference to other phosphoinositides tested. Involved in late stages of cytokinesis. Plays a role in endosomal sorting/trafficking of EGF receptor. The protein is Charged multivesicular body protein 3 (CHMP3) of Bos taurus (Bovine).